The chain runs to 366 residues: Spermine synthase (366 aa).

The residue at position 2 (Ala-2) is an N-acetylalanine. At Ser-57 the chain carries Phosphoserine. In terms of domain architecture, PABS spans 122 to 362 (RYWPTADGRL…ELWVFYTVWK (241 aa)). Residue Gln-148 coordinates S-adenosyl 3-(methylsulfanyl)propylamine. 2 residues coordinate spermidine: Tyr-177 and Asp-201. S-adenosyl 3-(methylsulfanyl)propylamine is bound by residues Glu-220 and 255-256 (DC). Residue Asp-276 is the Proton acceptor of the active site. Positions 351 and 353 each coordinate spermidine.

It belongs to the spermidine/spermine synthase family. In terms of assembly, homodimer. Dimerization is mediated through the N-terminal domain and seems to be required for activity as deletion of the N-terminal domain causes complete loss of activity.

It catalyses the reaction S-adenosyl 3-(methylsulfanyl)propylamine + spermidine = spermine + S-methyl-5'-thioadenosine + H(+). It functions in the pathway amine and polyamine biosynthesis; spermine biosynthesis; spermine from spermidine: step 1/1. Functionally, catalyzes the production of spermine from spermidine and decarboxylated S-adenosylmethionine (dcSAM). Required for normal viability, growth and fertility. This is Spermine synthase (Sms) from Mus musculus (Mouse).